Here is a 467-residue protein sequence, read N- to C-terminus: L-histidine transporter HutT (467 aa).

Transmembrane regions (helical) follow at residues Phe-18–Gln-38, Met-39–Met-59, Val-71–Leu-91, Met-99–Pro-119, Ile-125–Phe-145, Leu-155–Phe-175, Val-200–Ile-220, Ile-245–Ile-265, Gly-280–Ile-300, Trp-334–Ile-354, Val-358–Leu-378, Phe-402–Gly-422, and Ala-429–Cys-449.

It belongs to the amino acid-polyamine-organocation (APC) superfamily. Amino acid transporter (AAT) (TC 2.A.3.1) family.

Its subcellular location is the cell inner membrane. It carries out the reaction L-histidine(out) + n H(+)(out) = L-histidine(in) + n H(+)(in). Transport activity is inhibited by the proton ionophores carbonyl cyanide m-chlorophenyl hydrazine (CCCP) and 2,4-dinitrophenol (DNP), but not by valinomycin, nigericin and nonactin. Uptake is reduced in the presence of the sulfhydryl reagent N-ethylmaleimide (NEM). Uptake is not affected by arginine, lysine, proline or compounds structurally related to histidine such as imidazole, 3-amino-1,2,4-triazole and urocanate. Only 1,2,4-triazolyl-3-alanine reduces the rate of L-histidine uptake significantly. In terms of biological role, major high-affinity histidine transporter. Binds and catalyzes the uptake of histidine into the cell. Functions as an histidine:proton symporter with high specificity for histidine. The protein is L-histidine transporter HutT of Pseudomonas putida (strain ATCC 47054 / DSM 6125 / CFBP 8728 / NCIMB 11950 / KT2440).